We begin with the raw amino-acid sequence, 33 residues long: Brevinin 2AV (33 aa).

A disulfide bond links C27 and C33.

In terms of tissue distribution, expressed by the skin glands.

It localises to the secreted. In terms of biological role, has antibacterial activity. The protein is Brevinin 2AV of Rana arvalis (Moor frog).